A 298-amino-acid polypeptide reads, in one-letter code: Zinc finger protein-like 1 homolog (298 aa).

The B box-type; degenerate zinc finger occupies 1–43; the sequence is MGLCKCPKRLVTNQFCFEHRVNVCEHCMVQSHPKCIVQSYLQW. An RING-type; atypical zinc finger spans residues 53-101; the sequence is CTLCGTTLEQGDCVRLVCYHVFHWDCLNARQAALPANTAPRGHQCPACT. Positions 199-230 are disordered; the sequence is AGDYASSRRPLLPRQSPIGGTDRDDNKYQRRT. Serine 214 bears the Phosphoserine mark. Residues 255-275 traverse the membrane as a helical segment; sequence WFLVTAGILAFVLFVYLMAWL.

This sequence belongs to the ZFPL1 family.

The protein localises to the membrane. The protein is Zinc finger protein-like 1 homolog of Drosophila erecta (Fruit fly).